The sequence spans 279 residues: Thymidylate synthase (279 aa).

A dUMP-binding site is contributed by 133 to 134 (RR). The active-site Nucleophile is the Cys154. DUMP is bound by residues 178-181 (RSND), Asn189, and 219-221 (HIY). Asp181 is a binding site for (6R)-5,10-methylene-5,6,7,8-tetrahydrofolate. Ala278 serves as a coordination point for (6R)-5,10-methylene-5,6,7,8-tetrahydrofolate.

It belongs to the thymidylate synthase family. Bacterial-type ThyA subfamily. As to quaternary structure, homodimer.

It is found in the cytoplasm. The catalysed reaction is dUMP + (6R)-5,10-methylene-5,6,7,8-tetrahydrofolate = 7,8-dihydrofolate + dTMP. It functions in the pathway pyrimidine metabolism; dTTP biosynthesis. Catalyzes the reductive methylation of 2'-deoxyuridine-5'-monophosphate (dUMP) to 2'-deoxythymidine-5'-monophosphate (dTMP) while utilizing 5,10-methylenetetrahydrofolate (mTHF) as the methyl donor and reductant in the reaction, yielding dihydrofolate (DHF) as a by-product. This enzymatic reaction provides an intracellular de novo source of dTMP, an essential precursor for DNA biosynthesis. The polypeptide is Thymidylate synthase (Streptococcus sanguinis (strain SK36)).